Consider the following 430-residue polypeptide: Adenylosuccinate synthetase (430 aa).

Residues 12–18 (GDEGKGK) and 40–42 (GHT) contribute to the GTP site. Residue Asp-13 is the Proton acceptor of the active site. Asp-13 and Gly-40 together coordinate Mg(2+). IMP is bound by residues 13-16 (DEGK), 38-41 (NAGH), Thr-128, Arg-142, Gln-223, Thr-238, and Arg-302. The active-site Proton donor is His-41. Residue 298 to 304 (TTTGRPR) coordinates substrate. GTP-binding positions include Arg-304, 330–332 (LLD), and 412–414 (SVG).

Belongs to the adenylosuccinate synthetase family. In terms of assembly, homodimer. Mg(2+) serves as cofactor.

It is found in the cytoplasm. The enzyme catalyses IMP + L-aspartate + GTP = N(6)-(1,2-dicarboxyethyl)-AMP + GDP + phosphate + 2 H(+). It participates in purine metabolism; AMP biosynthesis via de novo pathway; AMP from IMP: step 1/2. In terms of biological role, plays an important role in the de novo pathway of purine nucleotide biosynthesis. Catalyzes the first committed step in the biosynthesis of AMP from IMP. This chain is Adenylosuccinate synthetase, found in Listeria innocua serovar 6a (strain ATCC BAA-680 / CLIP 11262).